Here is a 593-residue protein sequence, read N- to C-terminus: Efflux pump FUB11 (593 aa).

The disordered stretch occupies residues 1–45 (MAIDPQPSSPSLSSETIANDTIGNDNNVNEPSVEPKTQEHQHTVP). Over residues 9-30 (SPSLSSETIANDTIGNDNNVNE) the composition is skewed to polar residues. N-linked (GlcNAc...) asparagine glycosylation occurs at asparagine 19. 12 consecutive transmembrane segments (helical) span residues 98–118 (WAFVLLQSLACLATTFASSAY), 135–155 (VATLGISLYVLGFTFGPLVWA), 167–187 (FFFTFMVATAFSAGAAGAGSI), 195–215 (FLTGSIGSAPLSNAPALIADM), 227–247 (MFSGAPFLGPAIGPIAGGFLG), 254–274 (WLHGLMAAFTGVTWIACTVFI), 337–357 (IYISIIYGTMYMCFAAFPIVF), 367–387 (IGGLAFTGIVIGVILSIISFA), 410–430 (LPPAIMGSLLIPIGLFWFAWT), 438–458 (IVPIIGTVFFAWGLVLVFMAL), 468–488 (IFAASIMAANSALRSLFGAAF), and 503–523 (WASSIPAFLALACVPFPFLFY). The segment at 570-593 (THNSHASAAHSHGHRRSLSYTRSA) is disordered.

Belongs to the major facilitator superfamily. DHA1 family. Polyamines/proton antiporter (TC 2.A.1.2.16) subfamily.

The protein resides in the cell membrane. Functionally, efflux pump involved in export of fusaric acid, a mycotoxin with low to moderate toxicity to animals and humans, but with high phytotoxic properties. Constitutes a self-protecting mechanism of the fungus against critical levels of FSA within the cell. The chain is Efflux pump FUB11 from Gibberella moniliformis (strain M3125 / FGSC 7600) (Maize ear and stalk rot fungus).